Consider the following 77-residue polypeptide: Conotoxin Cl6.15 (77 aa).

A signal peptide spans 1–19; it reads MKLSVKFLLFLMILPLIAG. The propeptide occupies 20-37; that stretch reads EDMSDNDAPKSVDVQRNV. 3 disulfides stabilise this stretch: cysteine 49–cysteine 61, cysteine 55–cysteine 66, and cysteine 60–cysteine 75.

The protein belongs to the conotoxin I1 superfamily. Expressed by the venom duct.

The protein localises to the secreted. The sequence is that of Conotoxin Cl6.15 from Californiconus californicus (California cone).